The primary structure comprises 286 residues: MEGKEEDVRVGANKFPERQPIGTSAQTDKDYKEPPPAPFFEPGELSSWSFYRAGIAEFIATFLFLYITVLTVMGVKRAPNMCASVGIQGIAWAFGGMIFALVYCTAGISGGHINPAVTFGLFLARKLSLTRAVFYIVMQCLGAICGAGVVKGFQPNPYQTLGGGANTVAHGYTKGSGLGAEIIGTFVLVYTVFSATDAKRSARDSHVPILAPLPIGFAVFLVHLATIPITGTGINPARSLGAAIIYNKDHAWDDHWIFWVGPFIGAALAALYHQLVIRAIPFKSRS.

N-acetylmethionine is present on methionine 1. The disordered stretch occupies residues 1-33; the sequence is MEGKEEDVRVGANKFPERQPIGTSAQTDKDYKE. Residues 1-54 are Cytoplasmic-facing; that stretch reads MEGKEEDVRVGANKFPERQPIGTSAQTDKDYKEPPPAPFFEPGELSSWSFYRAG. A helical membrane pass occupies residues 55–75; it reads IAEFIATFLFLYITVLTVMGV. Residues 76 to 81 are Extracellular-facing; that stretch reads KRAPNM. A helical membrane pass occupies residues 82–102; sequence CASVGIQGIAWAFGGMIFALV. Residues 103–132 lie on the Cytoplasmic side of the membrane; sequence YCTAGISGGHINPAVTFGLFLARKLSLTRA. Residues 114–116 carry the NPA 1 motif; sequence NPA. Residues 133 to 153 form a helical membrane-spanning segment; that stretch reads VFYIVMQCLGAICGAGVVKGF. The Extracellular portion of the chain corresponds to 154-174; that stretch reads QPNPYQTLGGGANTVAHGYTK. A helical transmembrane segment spans residues 175–195; that stretch reads GSGLGAEIIGTFVLVYTVFSA. Over 196–208 the chain is Cytoplasmic; that stretch reads TDAKRSARDSHVP. The chain crosses the membrane as a helical span at residues 209-229; it reads ILAPLPIGFAVFLVHLATIPI. The Extracellular portion of the chain corresponds to 230–256; sequence TGTGINPARSLGAAIIYNKDHAWDDHW. Positions 235–237 match the NPA 2 motif; that stretch reads NPA. A helical transmembrane segment spans residues 257 to 277; sequence IFWVGPFIGAALAALYHQLVI. The Cytoplasmic portion of the chain corresponds to 278–286; sequence RAIPFKSRS. Position 284 is a phosphoserine (serine 284).

The protein belongs to the MIP/aquaporin (TC 1.A.8) family. PIP (TC 1.A.8.11) subfamily. As to expression, expressed in roots, above ground, ripening fruit, flower buds, green siliques and senescing leaves.

The protein resides in the cell membrane. Water channel required to facilitate the transport of water across cell membrane. Its function is impaired by Hg(2+). The chain is Aquaporin PIP1-3 (PIP1-3) from Arabidopsis thaliana (Mouse-ear cress).